The chain runs to 1238 residues: Virulence sensor protein BvgS (1238 aa).

A signal peptide spans 1–32 (MPAPHRLYPRSLICLAQALLAWALLAWAPAQA). Topologically, residues 33–307 (SQELTLVGKA…REQQWMADHP (275 aa)) are cytoplasmic. A helical transmembrane segment spans residues 308–331 (VVKVAVLNLFAPFTLFRTDEQFGG). The Periplasmic segment spans residues 332–541 (ISAAVLQLLQ…PRTWYAYRNE (210 aa)). The chain crosses the membrane as a helical span at residues 542 to 563 (IYLLIGLGLLSALLFLSWIVYL). The Cytoplasmic portion of the chain corresponds to 564–1238 (RRQIRQRKRA…LEQRPHQDQP (675 aa)). One can recognise a PAS domain in the interval 580-651 (QLEFMRVLID…MHEFLLTRVA (72 aa)). The PAC domain maps to 652–708 (AEREPRFEDRDVTLHGRTRHVYQWTIPYGDSLGELKGIIGGWIDITERAELLRKLHD). The region spanning 726–948 (TMSHEIRTPM…TVSVDLRLTM (223 aa)) is the Histidine kinase domain. Residue His729 is modified to Phosphohistidine; by autocatalysis. The 122-residue stretch at 974–1095 (RVLVVDDHKP…ALRQRLNEAV (122 aa)) folds into the Response regulatory domain. Asp1023 carries the post-translational modification 4-aspartylphosphate. Residues 1133–1228 (DEALIRQLLE…AALETQLRAW (96 aa)) enclose the HPt domain. The residue at position 1172 (His1172) is a Phosphohistidine.

In terms of processing, activation requires a sequential transfer of a phosphate group from a His in the primary transmitter domain, to an Asp in the receiver domain and to a His in the secondary transmitter domain.

It localises to the cell inner membrane. It carries out the reaction ATP + protein L-histidine = ADP + protein N-phospho-L-histidine.. In terms of biological role, member of the two-component regulatory system BvgS/BvgA. Phosphorylates BvgA via a four-step phosphorelay in response to environmental signals. This is Virulence sensor protein BvgS (bvgS) from Bordetella pertussis (strain Tohama I / ATCC BAA-589 / NCTC 13251).